We begin with the raw amino-acid sequence, 143 residues long: Putative pre-16S rRNA nuclease (143 aa).

This sequence belongs to the YqgF nuclease family.

The protein resides in the cytoplasm. Could be a nuclease involved in processing of the 5'-end of pre-16S rRNA. The sequence is that of Putative pre-16S rRNA nuclease from Ralstonia pickettii (strain 12J).